The following is a 448-amino-acid chain: L-seryl-tRNA(Sec) selenium transferase (448 aa).

K284 carries the N6-(pyridoxal phosphate)lysine modification.

The protein belongs to the SelA family. The cofactor is pyridoxal 5'-phosphate.

It localises to the cytoplasm. The catalysed reaction is L-seryl-tRNA(Sec) + selenophosphate + H(+) = L-selenocysteinyl-tRNA(Sec) + phosphate. The protein operates within aminoacyl-tRNA biosynthesis; selenocysteinyl-tRNA(Sec) biosynthesis; selenocysteinyl-tRNA(Sec) from L-seryl-tRNA(Sec) (bacterial route): step 1/1. Converts seryl-tRNA(Sec) to selenocysteinyl-tRNA(Sec) required for selenoprotein biosynthesis. The protein is L-seryl-tRNA(Sec) selenium transferase of Nautilia profundicola (strain ATCC BAA-1463 / DSM 18972 / AmH).